The following is a 664-amino-acid chain: Fructose-1,6-bisphosphatase class 3 (664 aa).

The protein belongs to the FBPase class 3 family. It depends on Mn(2+) as a cofactor.

It catalyses the reaction beta-D-fructose 1,6-bisphosphate + H2O = beta-D-fructose 6-phosphate + phosphate. Its pathway is carbohydrate biosynthesis; gluconeogenesis. The sequence is that of Fructose-1,6-bisphosphatase class 3 from Bacteroides fragilis (strain YCH46).